A 590-amino-acid polypeptide reads, in one-letter code: DNA mismatch repair protein MutL (590 aa).

It belongs to the DNA mismatch repair MutL/HexB family.

This protein is involved in the repair of mismatches in DNA. It is required for dam-dependent methyl-directed DNA mismatch repair. May act as a 'molecular matchmaker', a protein that promotes the formation of a stable complex between two or more DNA-binding proteins in an ATP-dependent manner without itself being part of a final effector complex. The protein is DNA mismatch repair protein MutL of Caldanaerobacter subterraneus subsp. tengcongensis (strain DSM 15242 / JCM 11007 / NBRC 100824 / MB4) (Thermoanaerobacter tengcongensis).